The chain runs to 213 residues: 5-deoxy-D-ribulose 1-phosphate aldolase (213 aa).

Substrate-binding positions include 28–29, 45–46, and 74–76; these read GN, SG, and SSE. The Proton donor/acceptor role is filled by glutamate 76. Glutamate 76, histidine 95, histidine 97, and histidine 157 together coordinate Mn(2+).

The protein belongs to the aldolase class II family. In terms of assembly, forms homooligomers, possibly homotetramers. Requires Mn(2+) as cofactor.

It carries out the reaction 5-deoxy-D-ribulose 1-phosphate = dihydroxyacetone phosphate + acetaldehyde. Its pathway is carbohydrate degradation. Functionally, catalyzes the cleavage of 5-deoxy-D-ribulose 1-phosphate to yield dihydroxyacetone phosphate (DHAP) and acetaldehyde, as part of a 5-deoxyribose salvage pathway that recycles this toxic radical SAM enzyme by-product to mainstream metabolites. Is also able to catalyze the reverse reaction, using several aldehydes as substrate, with acetaldehyde being the preferred substrate. In Bacillus thuringiensis serovar kurstaki (strain ATCC 35866 / NRRL B-4488 / HD73), this protein is 5-deoxy-D-ribulose 1-phosphate aldolase.